The chain runs to 248 residues: Probable transcriptional regulatory protein PFL_4766 (248 aa).

This sequence belongs to the TACO1 family.

The protein resides in the cytoplasm. The sequence is that of Probable transcriptional regulatory protein PFL_4766 from Pseudomonas fluorescens (strain ATCC BAA-477 / NRRL B-23932 / Pf-5).